Consider the following 185-residue polypeptide: Peptidyl-tRNA hydrolase (185 aa).

Tyrosine 14 serves as a coordination point for tRNA. Residue histidine 19 is the Proton acceptor of the active site. TRNA is bound by residues tyrosine 65, asparagine 67, and asparagine 113.

The protein belongs to the PTH family. In terms of assembly, monomer.

The protein localises to the cytoplasm. It carries out the reaction an N-acyl-L-alpha-aminoacyl-tRNA + H2O = an N-acyl-L-amino acid + a tRNA + H(+). In terms of biological role, hydrolyzes ribosome-free peptidyl-tRNAs (with 1 or more amino acids incorporated), which drop off the ribosome during protein synthesis, or as a result of ribosome stalling. Catalyzes the release of premature peptidyl moieties from peptidyl-tRNA molecules trapped in stalled 50S ribosomal subunits, and thus maintains levels of free tRNAs and 50S ribosomes. In Rickettsia conorii (strain ATCC VR-613 / Malish 7), this protein is Peptidyl-tRNA hydrolase.